The primary structure comprises 474 residues: Cyclin-dependent kinase 18 (474 aa).

Phosphoserine occurs at positions 14, 74, 89, 98, 117, and 132. Residues 44 to 87 (DLQLGPLGRDPLQECSTFSPTDSGEEPGQLSPGVQFQRRQNQRR) are disordered. The Protein kinase domain maps to 144-425 (YVKLDKLGEG…AEAALSHPYF (282 aa)). ATP is bound by residues 150-158 (LGEGTYATV) and Lys-173. The active-site Proton acceptor is Asp-265. Phosphoserine is present on residues Ser-440 and Ser-443.

This sequence belongs to the protein kinase superfamily. CMGC Ser/Thr protein kinase family. CDC2/CDKX subfamily.

The enzyme catalyses L-seryl-[protein] + ATP = O-phospho-L-seryl-[protein] + ADP + H(+). It carries out the reaction L-threonyl-[protein] + ATP = O-phospho-L-threonyl-[protein] + ADP + H(+). In terms of biological role, may play a role in signal transduction cascades in terminally differentiated cells. The polypeptide is Cyclin-dependent kinase 18 (CDK18) (Pongo abelii (Sumatran orangutan)).